The primary structure comprises 48 residues: Large ribosomal subunit protein bL34 (48 aa).

It belongs to the bacterial ribosomal protein bL34 family.

In Mycoplasma genitalium (strain ATCC 33530 / DSM 19775 / NCTC 10195 / G37) (Mycoplasmoides genitalium), this protein is Large ribosomal subunit protein bL34 (rpmH).